Consider the following 131-residue polypeptide: Global transcriptional regulator Spx 1 (131 aa).

Cys10 and Cys13 form a disulfide bridge.

Belongs to the ArsC family. Spx subfamily. Interacts with the C-terminal domain of the alpha subunit of the RNAP.

The protein resides in the cytoplasm. In terms of biological role, global transcriptional regulator that plays a key role in stress response and exerts either positive or negative regulation of genes. Acts by interacting with the C-terminal domain of the alpha subunit of the RNA polymerase (RNAP). This interaction can enhance binding of RNAP to the promoter region of target genes and stimulate their transcription, or block interaction of RNAP with activator. This is Global transcriptional regulator Spx 1 from Bacillus anthracis.